A 444-amino-acid polypeptide reads, in one-letter code: Deoxyguanosinetriphosphate triphosphohydrolase-like protein (444 aa).

The interval 1-26 (MTESLWHERRLTEEKKRRNDHRSPYQ) is disordered. Residues 59 to 250 (RLTHSLEVSQ…MELADDIAYA (192 aa)) enclose the HD domain.

It belongs to the dGTPase family. Type 2 subfamily.

In Shewanella sediminis (strain HAW-EB3), this protein is Deoxyguanosinetriphosphate triphosphohydrolase-like protein.